The following is a 383-amino-acid chain: uncharacterized protein (383 aa).

To V.anguillarum virulence protein VirA.

Its function is as follows. Could have an enzymatic function. This is an uncharacterized protein from Sinorhizobium fredii (strain NBRC 101917 / NGR234).